The sequence spans 188 residues: Elongation factor P (188 aa).

The protein belongs to the elongation factor P family.

Its subcellular location is the cytoplasm. It functions in the pathway protein biosynthesis; polypeptide chain elongation. Involved in peptide bond synthesis. Stimulates efficient translation and peptide-bond synthesis on native or reconstituted 70S ribosomes in vitro. Probably functions indirectly by altering the affinity of the ribosome for aminoacyl-tRNA, thus increasing their reactivity as acceptors for peptidyl transferase. The sequence is that of Elongation factor P from Streptomyces coelicolor (strain ATCC BAA-471 / A3(2) / M145).